The chain runs to 476 residues: Serine/threonine-protein kinase PknF (476 aa).

The 268-residue stretch at 12–279 folds into the Protein kinase domain; that stretch reads FTIVRQLGSG…FARALGHRLG (268 aa). ATP is bound by residues 18-26 and lysine 41; that span reads LGSGGMGEV. Catalysis depends on aspartate 137, which acts as the Proton acceptor. A helical membrane pass occupies residues 306 to 326; that stretch reads TAVIVPAVLAMLLVMAVAVAV. The interval 332–376 is disordered; it reads ADDERAAQPARTRTTTSAGTTTSVAPASTTRPAPTTPTTTGAADT. Positions 338–376 are enriched in low complexity; that stretch reads AQPARTRTTTSAGTTTSVAPASTTRPAPTTPTTTGAADT.

Belongs to the protein kinase superfamily. Ser/Thr protein kinase family. In terms of processing, autophosphorylated. Dephosphorylated by PstP.

The protein localises to the cell membrane. The catalysed reaction is L-seryl-[protein] + ATP = O-phospho-L-seryl-[protein] + ADP + H(+). The enzyme catalyses L-threonyl-[protein] + ATP = O-phospho-L-threonyl-[protein] + ADP + H(+). Functionally, a serine/threonine-protein kinase, acts on HupB in vitro. The protein is Serine/threonine-protein kinase PknF of Mycobacterium tuberculosis (strain ATCC 25177 / H37Ra).